The primary structure comprises 380 residues: Chorismate synthase (380 aa).

An NADP(+)-binding site is contributed by Arg47. FMN-binding positions include 124-126 (RSS), Gly288, 303-307 (KPTST), and Arg329.

It belongs to the chorismate synthase family. As to quaternary structure, homotetramer. FMNH2 is required as a cofactor.

The enzyme catalyses 5-O-(1-carboxyvinyl)-3-phosphoshikimate = chorismate + phosphate. Its pathway is metabolic intermediate biosynthesis; chorismate biosynthesis; chorismate from D-erythrose 4-phosphate and phosphoenolpyruvate: step 7/7. Its function is as follows. Catalyzes the anti-1,4-elimination of the C-3 phosphate and the C-6 proR hydrogen from 5-enolpyruvylshikimate-3-phosphate (EPSP) to yield chorismate, which is the branch point compound that serves as the starting substrate for the three terminal pathways of aromatic amino acid biosynthesis. This reaction introduces a second double bond into the aromatic ring system. The chain is Chorismate synthase from Leptospira interrogans serogroup Icterohaemorrhagiae serovar copenhageni (strain Fiocruz L1-130).